The chain runs to 321 residues: Acetyl-coenzyme A carboxylase carboxyl transferase subunit alpha (321 aa).

Residues 39–293 (RLEVKSQALT…KRALAEALRQ (255 aa)) enclose the CoA carboxyltransferase C-terminal domain.

It belongs to the AccA family. Acetyl-CoA carboxylase is a heterohexamer composed of biotin carboxyl carrier protein (AccB), biotin carboxylase (AccC) and two subunits each of ACCase subunit alpha (AccA) and ACCase subunit beta (AccD).

The protein resides in the cytoplasm. The catalysed reaction is N(6)-carboxybiotinyl-L-lysyl-[protein] + acetyl-CoA = N(6)-biotinyl-L-lysyl-[protein] + malonyl-CoA. Its pathway is lipid metabolism; malonyl-CoA biosynthesis; malonyl-CoA from acetyl-CoA: step 1/1. Functionally, component of the acetyl coenzyme A carboxylase (ACC) complex. First, biotin carboxylase catalyzes the carboxylation of biotin on its carrier protein (BCCP) and then the CO(2) group is transferred by the carboxyltransferase to acetyl-CoA to form malonyl-CoA. This Azoarcus sp. (strain BH72) protein is Acetyl-coenzyme A carboxylase carboxyl transferase subunit alpha.